Reading from the N-terminus, the 257-residue chain is MMHSKKLMLGICLVLLIILIVGYVIMTKINSRSAQIKDTFNQTLKLYPTKNLEDFYDKEGFRDQEFEKGDKGNWIVDSEMVIELKDKKMESRSMVLYINRNTRTTKGNFIVRELWEDSKGYAQSKDTKYPVKMEHNRIIPTKPIADDKLRKEIENFKFFVQYGDFKDINDYKDGDISYNPNVPSYSAKYQLKNDDYNVKQLRKRYNIPTNKAPKLLLKGDGDLKGSSIGSKNLEFTFVENKEENIYFSDSINFKPTE.

Residues 7 to 27 (LMLGICLVLLIILIVGYVIMT) traverse the membrane as a helical segment.

It belongs to the staphylococcal tandem lipoprotein family.

It is found in the cell membrane. This is an uncharacterized protein from Staphylococcus aureus (strain Mu50 / ATCC 700699).